A 307-amino-acid polypeptide reads, in one-letter code: Mediator of RNA polymerase II transcription subunit 18 (307 aa).

Residues 117-126 (TNFNSTNEDQ) show a composition bias toward polar residues. Positions 117-162 (TNFNSTNEDQNNSKHTEDTVNESRNSDDIIDVDMDASPAPSNESCS) are disordered.

It belongs to the Mediator complex subunit 18 family. As to quaternary structure, component of the Mediator complex, which is composed of at least 21 subunits that form three structurally distinct submodules. The Mediator head module contains MED6, MED8, MED11, SRB4/MED17, SRB5/MED18, ROX3/MED19, SRB2/MED20 and SRB6/MED22, the middle module contains MED1, MED4, NUT1/MED5, MED7, CSE2/MED9, NUT2/MED10, SRB7/MED21 and SOH1/MED31, and the tail module contains MED2, PGD1/MED3, RGR1/MED14, GAL11/MED15 and SIN4/MED16. The head and the middle modules interact directly with RNA polymerase II, whereas the elongated tail module interacts with gene-specific regulatory proteins. SRB5/MED18 interacts directly with MED8 and SRB2/MED20.

Its subcellular location is the nucleus. In terms of biological role, component of the Mediator complex, a coactivator involved in the regulated transcription of nearly all RNA polymerase II-dependent genes. Mediator functions as a bridge to convey information from gene-specific regulatory proteins to the basal RNA polymerase II transcription machinery. The Mediator complex, having a compact conformation in its free form, is recruited to promoters by direct interactions with regulatory proteins and serves for the assembly of a functional preinitiation complex with RNA polymerase II and the general transcription factors. The Mediator complex unfolds to an extended conformation and partially surrounds RNA polymerase II, specifically interacting with the unphosphorylated form of the C-terminal domain (CTD) of RNA polymerase II. The Mediator complex dissociates from the RNA polymerase II holoenzyme and stays at the promoter when transcriptional elongation begins. This is Mediator of RNA polymerase II transcription subunit 18 (SRB5) from Saccharomyces cerevisiae (strain ATCC 204508 / S288c) (Baker's yeast).